The chain runs to 96 residues: Co-chaperonin GroES (96 aa).

This sequence belongs to the GroES chaperonin family. In terms of assembly, heptamer of 7 subunits arranged in a ring. Interacts with the chaperonin GroEL.

The protein resides in the cytoplasm. Together with the chaperonin GroEL, plays an essential role in assisting protein folding. The GroEL-GroES system forms a nano-cage that allows encapsulation of the non-native substrate proteins and provides a physical environment optimized to promote and accelerate protein folding. GroES binds to the apical surface of the GroEL ring, thereby capping the opening of the GroEL channel. This Nitrosospira multiformis (strain ATCC 25196 / NCIMB 11849 / C 71) protein is Co-chaperonin GroES.